We begin with the raw amino-acid sequence, 459 residues long: Asperlicin C monooxygenase (459 aa).

FAD-binding residues include Asp49, Ala62, and Arg121. Arg199 is an active-site residue. 2 residues coordinate FAD: Asp323 and Ala336.

This sequence belongs to the paxM FAD-dependent monooxygenase family. Requires FAD as cofactor.

The catalysed reaction is asperlicin C + NADPH + O2 + H(+) = asperlicin E + NADP(+) + H2O. The enzyme catalyses asperlicin C + NADH + O2 + H(+) = asperlicin E + NAD(+) + H2O. In terms of biological role, catalyzes the conversion of asperlicin A to form asperlicin E, a potent cholecystokinin receptor CCK(A) antagonist. The protein is Asperlicin C monooxygenase of Petromyces alliaceus (Aspergillus alliaceus).